The following is a 156-amino-acid chain: Cyclic pyranopterin monophosphate synthase (156 aa).

Residues 73–75 (LCH) and 110–111 (ME) each bind substrate. Asp-125 is a catalytic residue.

The protein belongs to the MoaC family. As to quaternary structure, homohexamer; trimer of dimers.

It carries out the reaction (8S)-3',8-cyclo-7,8-dihydroguanosine 5'-triphosphate = cyclic pyranopterin phosphate + diphosphate. It participates in cofactor biosynthesis; molybdopterin biosynthesis. Its function is as follows. Catalyzes the conversion of (8S)-3',8-cyclo-7,8-dihydroguanosine 5'-triphosphate to cyclic pyranopterin monophosphate (cPMP). This is Cyclic pyranopterin monophosphate synthase from Pseudomonas putida (strain GB-1).